A 696-amino-acid polypeptide reads, in one-letter code: MARTTPIERYRNIGISAHIDAGKTTTTERILFYTGKSHKIGEVHDGAATMDWMEQEQERGITITSAATTCFWKGMDGKFPEHRINIIDTPGHVDFTIEVERSMRVLDGACMVYCAVGGVQPQSETVWRQANKYGVPRLAFVNKMDRSGADFFKVYEQMRARLKANPVPIQVPIGAEDKFEGVVDLVKMKAIYWDDASQGMKFDLRDIPANLVDTCKKWREAMLEAAAESSEELMNKYLEEGDLPEADIIAALRARTIASEIVPMMCGTAFKNKGVQAMLDKVIELMPAPTDIPPVKGELENGEAGERQATDEEKFSALAFKVATDPYVGQLIFFRVYSGVVNSGDTIYNPVKGRKERIGRILQMHANQREEIKEVRAGDIAAAVGLKDVTTGDTLCDLNAPITLERMEFPEPVIHVAVEPKTKADQEKMGIALGRLAQEDPSFRVRTDEESGQTIISGMGELHLEILVDRMKREFGVEANVGAPQVAYREAIRKEVEQEGKHAKQSGGKGQYGHVWIKMGPNEAGKGFEFIDAIKGGTVPREFIPAVEKGLREALNNGVLAGFPVVDVKVTLFDGSYHDVDSSELAFKLAAILAFKDGMRKASPVLLEPMMAVEVETPEDYMGDVMGDLNRRRGIIQGMDDAAGIKLVKAEVPLAEMFGYSTDLRSMSQGRATYSMEFKHYSEAPKSVAEAIIAKK.

The region spanning 8–290 is the tr-type G domain; it reads ERYRNIGISA…KVIELMPAPT (283 aa). Residues 17–24, 88–92, and 142–145 contribute to the GTP site; these read AHIDAGKT, DTPGH, and NKMD.

It belongs to the TRAFAC class translation factor GTPase superfamily. Classic translation factor GTPase family. EF-G/EF-2 subfamily.

The protein resides in the cytoplasm. Functionally, catalyzes the GTP-dependent ribosomal translocation step during translation elongation. During this step, the ribosome changes from the pre-translocational (PRE) to the post-translocational (POST) state as the newly formed A-site-bound peptidyl-tRNA and P-site-bound deacylated tRNA move to the P and E sites, respectively. Catalyzes the coordinated movement of the two tRNA molecules, the mRNA and conformational changes in the ribosome. The protein is Elongation factor G of Thiobacillus denitrificans (strain ATCC 25259 / T1).